Here is a 1303-residue protein sequence, read N- to C-terminus: DNA-directed RNA polymerase subunit beta (1303 aa).

The protein belongs to the RNA polymerase beta chain family. In terms of assembly, the RNAP catalytic core consists of 2 alpha, 1 beta, 1 beta' and 1 omega subunit. When a sigma factor is associated with the core the holoenzyme is formed, which can initiate transcription.

It carries out the reaction RNA(n) + a ribonucleoside 5'-triphosphate = RNA(n+1) + diphosphate. Its function is as follows. DNA-dependent RNA polymerase catalyzes the transcription of DNA into RNA using the four ribonucleoside triphosphates as substrates. The sequence is that of DNA-directed RNA polymerase subunit beta from Chlorobaculum tepidum (strain ATCC 49652 / DSM 12025 / NBRC 103806 / TLS) (Chlorobium tepidum).